A 350-amino-acid chain; its full sequence is DNA polymerase IV (350 aa).

In terms of domain architecture, UmuC spans 6-187 (IIHIDMDAFY…LPVEKIFGIG (182 aa)). Mg(2+) is bound by residues D10 and D105. E106 is a catalytic residue.

This sequence belongs to the DNA polymerase type-Y family. As to quaternary structure, monomer. Mg(2+) is required as a cofactor.

The protein resides in the cytoplasm. The catalysed reaction is DNA(n) + a 2'-deoxyribonucleoside 5'-triphosphate = DNA(n+1) + diphosphate. In terms of biological role, poorly processive, error-prone DNA polymerase involved in untargeted mutagenesis. Copies undamaged DNA at stalled replication forks, which arise in vivo from mismatched or misaligned primer ends. These misaligned primers can be extended by PolIV. Exhibits no 3'-5' exonuclease (proofreading) activity. May be involved in translesional synthesis, in conjunction with the beta clamp from PolIII. This is DNA polymerase IV from Protochlamydia amoebophila (strain UWE25).